A 33-amino-acid chain; its full sequence is Beta-theraphotoxin-Cm1b (33 aa).

Intrachain disulfides connect Cys-2-Cys-17, Cys-9-Cys-22, and Cys-16-Cys-29. The residue at position 33 (Leu-33) is a Leucine amide.

Belongs to the neurotoxin 10 (Hwtx-1) family. 04 (CcoTx1) subfamily. As to expression, expressed by the venom gland.

It is found in the secreted. Inhibits several voltage-gated sodium channels and only one voltage-gated calcium channel (Cav2.2/CACNA1B (IC(50)=1.1 uM) and Nav1.2/SCN2A (IC(50)=3.7-80 nM), Nav1.3/SCN3A (IC(50)=88-5570 nM), Nav1.1/SCN1A (IC(50)=170-407 nM), Nav1.7/SCN9A (IC(50)=95.5-230 nM), Nav1.6/SCN6A (IC(50)=49.9-3990 nM), Nav1.4/SCN4A (IC(50)=113-400 nM or &gt;10 uM), Nav1.5/SCN5A (IC(50)=1524-1634 nM or &gt;10 uM)). The toxin acts by shifting the voltage dependence of channel activation to more depolarized potentials and by blocking the inward component of the sodium current. It shows moderate affinity for lipid bilayers without cholesterol and high affinity for lipid bilayers containing cholesterol. In vivo, this toxin causes general ataxia, lack of response to stimuli, and semiparalysis. After a few minutes, the mice are unable to stand, and breathing is reduced in rhythm and intensity. Symptoms gradually increase with progressive slowing of breathing and flaccid paralysis; death occurred within 10 to 20 minutes post injection. Animals remain totally flaccid, and no symptoms of excitatory neurotoxicity are observed. This is Beta-theraphotoxin-Cm1b from Ceratogyrus marshalli (Straighthorned baboon tarantula).